Here is a 272-residue protein sequence, read N- to C-terminus: Probable prolyl 4-hydroxylase 11 (272 aa).

Residues 1-55 (MSKSTSVSTILYLRQRLQGLKIYETSDLIQHINTFDELVGEQVSVDVKIEEKTKD) lie on the Cytoplasmic side of the membrane. The chain crosses the membrane as a helical; Signal-anchor for type II membrane protein span at residues 56 to 80 (MILLCSLSPLLTTLTCSMVKVAASL). Over 81-272 (RFPNERWLEV…KRHCLSLNLF (192 aa)) the chain is Lumenal. A Fe2OG dioxygenase domain is found at 179-272 (NGETLQVINY…KRHCLSLNLF (94 aa)). Fe cation is bound by residues histidine 197, aspartate 199, and histidine 261.

The protein belongs to the P4HA family. The cofactor is Fe(2+). L-ascorbate serves as cofactor.

It is found in the endoplasmic reticulum membrane. It carries out the reaction L-prolyl-[collagen] + 2-oxoglutarate + O2 = trans-4-hydroxy-L-prolyl-[collagen] + succinate + CO2. Functionally, catalyzes the post-translational formation of 4-hydroxyproline in -Xaa-Pro-Gly- sequences in proline-rich peptide sequences of plant glycoproteins and other proteins. Hydroxyprolines are important constituent of many plant cell wall glycoproteins such as extensins, hydroxyproline-rich glycoproteins, lectins and arabinogalactan proteins. This chain is Probable prolyl 4-hydroxylase 11, found in Arabidopsis thaliana (Mouse-ear cress).